The primary structure comprises 102 residues: A-type ATP synthase subunit F (102 aa).

It belongs to the V-ATPase F subunit family. Has multiple subunits with at least A(3), B(3), C, D, E, F, H, I and proteolipid K(x).

It localises to the cell membrane. In terms of biological role, component of the A-type ATP synthase that produces ATP from ADP in the presence of a proton gradient across the membrane. This Thermococcus sibiricus (strain DSM 12597 / MM 739) protein is A-type ATP synthase subunit F.